The sequence spans 313 residues: Proline iminopeptidase (313 aa).

In terms of domain architecture, AB hydrolase-1 spans 35-298 (KPVVMLHGGP…SPASGHSAFE (264 aa)). Serine 110 acts as the Nucleophile in catalysis. Aspartate 266 is a catalytic residue. The active-site Proton donor is histidine 294.

Belongs to the peptidase S33 family. As to quaternary structure, homooligomer.

It is found in the cytoplasm. The catalysed reaction is Release of N-terminal proline from a peptide.. Functionally, may be involved in proline metabolism and sensitivity to ascamycin. Has ascamycin dealanylating activity. This chain is Proline iminopeptidase (pip), found in Xanthomonas citri (Xanthomonas campestris pv. citri).